A 43-amino-acid chain; its full sequence is Protein PsbN (43 aa).

Residues 5 to 27 (TLVAISISGLLVSFTGYALYTAF) form a helical membrane-spanning segment.

It belongs to the PsbN family.

It localises to the plastid. It is found in the chloroplast thylakoid membrane. In terms of biological role, may play a role in photosystem I and II biogenesis. The sequence is that of Protein PsbN from Coelogyne cristata (Orchid).